We begin with the raw amino-acid sequence, 371 residues long: D-alanine--D-alanine ligase (371 aa).

The ATP-grasp domain occupies 154 to 361 (KKLLVAEGLP…YPTLLAAMVD (208 aa)). 182 to 237 (RERLGLPVFVKPARGGSSIGVSRVSDWAELPAAIEAARRHDPKVIVEAGIAGRELE) lines the ATP pocket. 3 residues coordinate Mg(2+): Asp316, Glu328, and Asn330.

This sequence belongs to the D-alanine--D-alanine ligase family. Mg(2+) serves as cofactor. Requires Mn(2+) as cofactor.

It is found in the cytoplasm. The catalysed reaction is 2 D-alanine + ATP = D-alanyl-D-alanine + ADP + phosphate + H(+). Its pathway is cell wall biogenesis; peptidoglycan biosynthesis. Its function is as follows. Cell wall formation. The sequence is that of D-alanine--D-alanine ligase from Mycobacterium sp. (strain KMS).